A 354-amino-acid polypeptide reads, in one-letter code: 3-dehydroquinate synthase (354 aa).

Residues D39, Y45, 68–71 (EKTK), 100–104 (GATGD), 124–125 (TT), K136, K145, and 163–166 (FLKT) each bind NAD(+). Zn(2+) is bound by residues E178, H242, and H256.

The protein belongs to the sugar phosphate cyclases superfamily. Dehydroquinate synthase family. NAD(+) is required as a cofactor. Co(2+) serves as cofactor. The cofactor is Zn(2+).

Its subcellular location is the cytoplasm. The catalysed reaction is 7-phospho-2-dehydro-3-deoxy-D-arabino-heptonate = 3-dehydroquinate + phosphate. Its pathway is metabolic intermediate biosynthesis; chorismate biosynthesis; chorismate from D-erythrose 4-phosphate and phosphoenolpyruvate: step 2/7. Functionally, catalyzes the conversion of 3-deoxy-D-arabino-heptulosonate 7-phosphate (DAHP) to dehydroquinate (DHQ). This is 3-dehydroquinate synthase from Staphylococcus aureus (strain MRSA252).